The sequence spans 361 residues: MIIYNTTELQAIHSFSRLEFLKEVYGSIWVLIPILTLVLGITLGVLVIVWLEREISAGIQQRIGPEYAGPLGILQALADGTKLLFKENLFPSRGDTRLFTIGPSIAVISILLSYSVIPFGYRLILGDLSIGVFLWIAVSSLAPIGLLMSGYGSNNKYSFLGGLRAAAQSISYEIPLTLCVLSISLLSNSFSTVDIVEAQSKYGFWGWNLWRQPIGFIVFLISSLAECERLPFDLPEAEEELVAGYQTEYSGIKFGLFYVASYLNLLVSSLFVTVLYLGGWNLSIPYLFVPELFERGKVFETIICIFITLAKTYLFLFISIATRWTLPRLRMDQLLNLGWKFLLPISLGNLLLTTSFQLLSL.

Helical transmembrane passes span 28–48 (IWVL…VLVI), 99–119 (FTIG…VIPF), 128–148 (LSIG…GLLM), 249–269 (YSGI…LVSS), 270–290 (LFVT…LFVP), 301–321 (TIIC…ISIA), and 341–361 (FLLP…LLSL).

This sequence belongs to the complex I subunit 1 family. As to quaternary structure, NDH is composed of at least 16 different subunits, 5 of which are encoded in the nucleus.

It localises to the plastid. The protein resides in the chloroplast thylakoid membrane. The catalysed reaction is a plastoquinone + NADH + (n+1) H(+)(in) = a plastoquinol + NAD(+) + n H(+)(out). It carries out the reaction a plastoquinone + NADPH + (n+1) H(+)(in) = a plastoquinol + NADP(+) + n H(+)(out). In terms of biological role, NDH shuttles electrons from NAD(P)H:plastoquinone, via FMN and iron-sulfur (Fe-S) centers, to quinones in the photosynthetic chain and possibly in a chloroplast respiratory chain. The immediate electron acceptor for the enzyme in this species is believed to be plastoquinone. Couples the redox reaction to proton translocation, and thus conserves the redox energy in a proton gradient. The polypeptide is NAD(P)H-quinone oxidoreductase subunit 1, chloroplastic (Jasminum nudiflorum (Winter jasmine)).